The sequence spans 81 residues: Photosystem I iron-sulfur center (81 aa).

4Fe-4S ferredoxin-type domains are found at residues 2–31 (AHSV…MVPW) and 39–68 (IASA…VRVY). 8 residues coordinate [4Fe-4S] cluster: C11, C14, C17, C21, C48, C51, C54, and C58.

In terms of assembly, the eukaryotic PSI reaction center is composed of at least 11 subunits. [4Fe-4S] cluster serves as cofactor.

Its subcellular location is the plastid. The protein localises to the chloroplast thylakoid membrane. The enzyme catalyses reduced [plastocyanin] + hnu + oxidized [2Fe-2S]-[ferredoxin] = oxidized [plastocyanin] + reduced [2Fe-2S]-[ferredoxin]. Apoprotein for the two 4Fe-4S centers FA and FB of photosystem I (PSI); essential for photochemical activity. FB is the terminal electron acceptor of PSI, donating electrons to ferredoxin. The C-terminus interacts with PsaA/B/D and helps assemble the protein into the PSI complex. Required for binding of PsaD and PsaE to PSI. PSI is a plastocyanin/cytochrome c6-ferredoxin oxidoreductase, converting photonic excitation into a charge separation, which transfers an electron from the donor P700 chlorophyll pair to the spectroscopically characterized acceptors A0, A1, FX, FA and FB in turn. This Pyropia yezoensis (Susabi-nori) protein is Photosystem I iron-sulfur center.